The sequence spans 152 residues: Large ribosomal subunit protein uL15 (152 aa).

The segment at 1 to 57 is disordered; that stretch reads MTSTLNTLKSNSGSRKKKLRKGRGIAAGQGASCGFGMRGQKSRSGRPTRPGFEGGQM. Residues 14–23 show a composition bias toward basic residues; that stretch reads SRKKKLRKGR. Residues 25–37 show a composition bias toward gly residues; sequence IAAGQGASCGFGM.

It belongs to the universal ribosomal protein uL15 family. Part of the 50S ribosomal subunit.

In terms of biological role, binds to the 23S rRNA. This is Large ribosomal subunit protein uL15 from Prochlorococcus marinus (strain AS9601).